Here is a 322-residue protein sequence, read N- to C-terminus: Peroxidase 66 (322 aa).

The signal sequence occupies residues 1–24; it reads MAFSKGLIFAMIFAVLAIVKPSEA. Disulfide bonds link Cys35–Cys114 and Cys68–Cys73. His66 acts as the Proton acceptor in catalysis. Ca(2+) contacts are provided by Asp67, Gly72, Asp74, and Ser76. Asn155 carries N-linked (GlcNAc...) asparagine glycosylation. Pro161 lines the substrate pocket. N-linked (GlcNAc...) asparagine glycosylation is present at Asn166. His191 contributes to the heme b binding site. Thr192 contributes to the Ca(2+) binding site. A disulfide bond links Cys198 and Cys230. N-linked (GlcNAc...) asparagine glycosylation occurs at Asn207. The Ca(2+) site is built by Asp245, Thr247, and Asp252.

It belongs to the peroxidase family. Classical plant (class III) peroxidase subfamily. It depends on heme b as a cofactor. The cofactor is Ca(2+).

The protein resides in the secreted. The enzyme catalyses 2 a phenolic donor + H2O2 = 2 a phenolic radical donor + 2 H2O. Its function is as follows. Removal of H(2)O(2), oxidation of toxic reductants, biosynthesis and degradation of lignin, suberization, auxin catabolism, response to environmental stresses such as wounding, pathogen attack and oxidative stress. These functions might be dependent on each isozyme/isoform in each plant tissue. The protein is Peroxidase 66 (PER66) of Arabidopsis thaliana (Mouse-ear cress).